A 179-amino-acid polypeptide reads, in one-letter code: Lebocin-1/2 (179 aa).

Positions 1–16 (MYKFLVFSSVLVLFFA) are cleaved as a signal peptide. Residues 17-120 (QASCQRFIQP…QPIESHRNTR (104 aa)) constitute a propeptide that is removed on maturation. Positions 93–116 (NNEASIEHSHHTVDTGLDQPIESH) are disordered. Thr135 carries an O-linked (GalNAc...) threonine glycan. Positions 153 to 179 (RRHASDDQEELRQYNEHFLIPRDIFQE) are excised as a propeptide.

Belongs to the lebocin family. Post-translationally, O-glycosylation is important for the antibacterial activity of lebocin, O-linked glycan structure is a disaccharide (Gal-GalNAc) in case of lebocin 1 and a monosaccharide (GalNAc) in case of lebocin 2. In terms of tissue distribution, hemolymph. Produced in fat body.

It localises to the secreted. Functionally, antibacterial peptide. This chain is Lebocin-1/2, found in Bombyx mori (Silk moth).